The chain runs to 358 residues: Biotin synthase (358 aa).

The 260-residue stretch at 47-306 (KNNSKIKLCA…ALYKIIMPYA (260 aa)) folds into the Radical SAM core domain. Residues Cys-65, Cys-69, and Cys-72 each coordinate [4Fe-4S] cluster. Ser-142, Cys-174, Cys-233, and Arg-309 together coordinate [2Fe-2S] cluster.

Belongs to the radical SAM superfamily. Biotin synthase family. Homodimer. It depends on [4Fe-4S] cluster as a cofactor. [2Fe-2S] cluster serves as cofactor.

The catalysed reaction is (4R,5S)-dethiobiotin + (sulfur carrier)-SH + 2 reduced [2Fe-2S]-[ferredoxin] + 2 S-adenosyl-L-methionine = (sulfur carrier)-H + biotin + 2 5'-deoxyadenosine + 2 L-methionine + 2 oxidized [2Fe-2S]-[ferredoxin]. It participates in cofactor biosynthesis; biotin biosynthesis; biotin from 7,8-diaminononanoate: step 2/2. Catalyzes the conversion of dethiobiotin (DTB) to biotin by the insertion of a sulfur atom into dethiobiotin via a radical-based mechanism. The chain is Biotin synthase from Methanocaldococcus jannaschii (strain ATCC 43067 / DSM 2661 / JAL-1 / JCM 10045 / NBRC 100440) (Methanococcus jannaschii).